Consider the following 489-residue polypeptide: Mitogen-activated protein kinase adapter protein MST50 (489 aa).

Residues 1–56 are disordered; it reads MSFNTGTAYAESDADDEYERDIHDSSPIDATDAEASPTESDPPSNEHTPTTYGYRS. Residues 37 to 54 are compositionally biased toward polar residues; that stretch reads PTESDPPSNEHTPTTYGY. An SAM domain is found at 69–132; it reads WTADECADFI…LRSVYDVKKA (64 aa). Disordered regions lie at residues 207 to 285 and 309 to 379; these read PLPH…AAER and SINI…GSNA. 2 stretches are compositionally biased toward polar residues: residues 256 to 265 and 328 to 346; these read PKATSPTHLQ and ASRS…STFA. One can recognise a Ras-associating domain in the interval 377-457; that stretch reads SNASVEIFKS…PMFMLRKTNN (81 aa).

As to quaternary structure, interacts with MST7 and MST11. Interacts with MCK1, MKK2 and HIK1.

Functionally, mitogen-activated protein kinase adapter protein; part of the MST11-MST7-PMK1 MAP kinase (MAPK) cascade that is essential for appressorium formation, penetration and invasive growth. Binds to the MAPKKK MST11 and the MAPKK MST7 to maintain the stability of the MST11-MST7 complex for the phosphorylation of the MAPK PMK1. Is also involved in the MPS1 and OSM1 MAPK pathways, and especially plays a role in the activation of MPS1 in response to cell wall stress. Its function differs in the 3 MAPK pathways. This chain is Mitogen-activated protein kinase adapter protein MST50, found in Pyricularia oryzae (strain 70-15 / ATCC MYA-4617 / FGSC 8958) (Rice blast fungus).